Consider the following 322-residue polypeptide: NADH-quinone oxidoreductase subunit H (322 aa).

The next 8 membrane-spanning stretches (helical) occupy residues 12–32 (IGKA…MSFI), 79–99 (IFIL…AVVP), 111–131 (VGLL…LFAG), 151–171 (LSYE…TGSF), 183–203 (LWNV…GVAV), 234–254 (FFVG…TLFF), 262–282 (LPPF…FILL), and 301–321 (VCLP…LMNV).

Belongs to the complex I subunit 1 family. NDH-1 is composed of 13 different subunits. Subunits NuoA, H, J, K, L, M, N constitute the membrane sector of the complex.

The protein localises to the cell inner membrane. The catalysed reaction is a quinone + NADH + 5 H(+)(in) = a quinol + NAD(+) + 4 H(+)(out). Functionally, NDH-1 shuttles electrons from NADH, via FMN and iron-sulfur (Fe-S) centers, to quinones in the respiratory chain. The immediate electron acceptor for the enzyme in this species is believed to be ubiquinone. Couples the redox reaction to proton translocation (for every two electrons transferred, four hydrogen ions are translocated across the cytoplasmic membrane), and thus conserves the redox energy in a proton gradient. This subunit may bind ubiquinone. The sequence is that of NADH-quinone oxidoreductase subunit H from Shewanella oneidensis (strain ATCC 700550 / JCM 31522 / CIP 106686 / LMG 19005 / NCIMB 14063 / MR-1).